A 123-amino-acid chain; its full sequence is Large ribosomal subunit protein uL29y (123 aa).

This sequence belongs to the universal ribosomal protein uL29 family.

This chain is Large ribosomal subunit protein uL29y (RPL35B), found in Arabidopsis thaliana (Mouse-ear cress).